The following is a 312-amino-acid chain: tRNA pseudouridine synthase B (312 aa).

Aspartate 37 acts as the Nucleophile in catalysis.

Belongs to the pseudouridine synthase TruB family. Type 1 subfamily.

The catalysed reaction is uridine(55) in tRNA = pseudouridine(55) in tRNA. Responsible for synthesis of pseudouridine from uracil-55 in the psi GC loop of transfer RNAs. The chain is tRNA pseudouridine synthase B from Deinococcus geothermalis (strain DSM 11300 / CIP 105573 / AG-3a).